The following is a 289-amino-acid chain: Cbb3-type cytochrome c oxidase subunit FixP (289 aa).

The Cytoplasmic segment spans residues 1–33 (MADKHKHVDEVSGVETTGHEWDGIRELNNPLPR). The chain crosses the membrane as a helical span at residues 34-56 (WWVYSFYATIIWAIGYAVAYPSW). Over 57–289 (PMLTEATKGV…VFVHSLGGGE (233 aa)) the chain is Periplasmic. Cytochrome c domains are found at residues 110–198 (FAVS…MSLT) and 205–286 (HLVE…HSLG). Cysteine 123, cysteine 126, histidine 127, methionine 175, cysteine 218, cysteine 221, histidine 222, and methionine 263 together coordinate heme c.

It belongs to the CcoP / FixP family. Component of the cbb3-type cytochrome c oxidase at least composed of FixN, FixO, FixQ and FixP. The cofactor is heme c.

The protein localises to the cell inner membrane. The protein operates within energy metabolism; oxidative phosphorylation. Functionally, C-type cytochrome. Part of the cbb3-type cytochrome c oxidase complex. FixP subunit is required for transferring electrons from donor cytochrome c via its heme groups to FixO subunit. From there, electrons are shuttled to the catalytic binuclear center of FixN subunit where oxygen reduction takes place. The complex also functions as a proton pump. The polypeptide is Cbb3-type cytochrome c oxidase subunit FixP (Sinorhizobium medicae (strain WSM419) (Ensifer medicae)).